The primary structure comprises 299 residues: 4-diphosphocytidyl-2-C-methyl-D-erythritol kinase (299 aa).

Lysine 11 is a catalytic residue. 94–104 (PQGGGLGGGSS) is a binding site for ATP. Aspartate 136 is a catalytic residue.

This sequence belongs to the GHMP kinase family. IspE subfamily.

It carries out the reaction 4-CDP-2-C-methyl-D-erythritol + ATP = 4-CDP-2-C-methyl-D-erythritol 2-phosphate + ADP + H(+). Its pathway is isoprenoid biosynthesis; isopentenyl diphosphate biosynthesis via DXP pathway; isopentenyl diphosphate from 1-deoxy-D-xylulose 5-phosphate: step 3/6. Catalyzes the phosphorylation of the position 2 hydroxy group of 4-diphosphocytidyl-2C-methyl-D-erythritol. This is 4-diphosphocytidyl-2-C-methyl-D-erythritol kinase from Bordetella parapertussis (strain 12822 / ATCC BAA-587 / NCTC 13253).